The primary structure comprises 865 residues: Centrosomal protein of 97 kDa (865 aa).

LRR repeat units lie at residues aspartate 37–lysine 58, arginine 59–threonine 80, leucine 81–valine 102, histidine 103–threonine 124, alanine 125–valine 146, serine 147–leucine 168, serine 171–alanine 192, and glutamate 196–asparagine 205. Residues threonine 211 to leucine 249 form the LRRCT domain. Residues histidine 300–aspartate 750 are CCP110-binding. A phosphoserine mark is found at serine 308, serine 413, and serine 500. A disordered region spans residues glutamate 506–isoleucine 529. Residues threonine 508 to glutamate 527 are compositionally biased toward basic and acidic residues. A Phosphoserine modification is found at serine 530. A Phosphothreonine modification is found at threonine 542. Positions leucine 558 to glutamate 587 constitute an IQ domain. The interaction with MPHOSPH9 stretch occupies residues glutamate 587–valine 865. The disordered stretch occupies residues glutamine 715–asparagine 769. Over residues threonine 725 to aspartate 738 the composition is skewed to polar residues. Over residues arginine 741 to lysine 760 the composition is skewed to basic and acidic residues. The residue at position 763 (serine 763) is a Phosphoserine.

As to quaternary structure, interacts with CALM1, CEP76, KIF24 and TALPID3. Interacts with CCP110. ENKD1 competes with CEP97 for binding to CCP110, destabilizing the interaction between CP110 and CEP97 which promotes the removal of CCP110 and CEP97 from the mother centriole and allows the initiation of ciliogenesis. Via its interaction with CCP110, may indirectly interact with HERC2 and NEURL4. Interacts with MPHOSPH9.

It is found in the cytoplasm. The protein localises to the cytoskeleton. The protein resides in the microtubule organizing center. It localises to the centrosome. Its subcellular location is the centriole. Acts as a key negative regulator of ciliogenesis in collaboration with CCP110 by capping the mother centriole thereby preventing cilia formation. Required for recruitment of CCP110 to the centrosome. This chain is Centrosomal protein of 97 kDa (CEP97), found in Homo sapiens (Human).